The primary structure comprises 487 residues: Betaine aldehyde dehydrogenase (487 aa).

2 residues coordinate K(+): Ile-27 and Asp-93. Gly-149–Trp-151 contacts NAD(+). The Charge relay system role is filled by Lys-161. Residues Lys-175–Glu-178 and Ser-228–Thr-231 each bind NAD(+). Leu-243 is a K(+) binding site. Glu-249 functions as the Proton acceptor in the catalytic mechanism. NAD(+) is bound by residues Gly-251, Cys-283, and Glu-384. The active-site Nucleophile is Cys-283. Cysteine sulfenic acid (-SOH) is present on Cys-283. Lys-454 and Gly-457 together coordinate K(+). Glu-461 acts as the Charge relay system in catalysis.

The protein belongs to the aldehyde dehydrogenase family. As to quaternary structure, dimer of dimers. K(+) serves as cofactor.

It carries out the reaction betaine aldehyde + NAD(+) + H2O = glycine betaine + NADH + 2 H(+). Its pathway is amine and polyamine biosynthesis; betaine biosynthesis via choline pathway; betaine from betaine aldehyde: step 1/1. Involved in the biosynthesis of the osmoprotectant glycine betaine. Catalyzes the irreversible oxidation of betaine aldehyde to the corresponding acid. This Brucella abortus (strain S19) protein is Betaine aldehyde dehydrogenase.